Consider the following 243-residue polypeptide: Venom peptide isomerase heavy chain (243 aa).

In terms of domain architecture, Peptidase S1 spans 1–243 (IVGGKTAKFG…YTNWMSKNMV (243 aa)). Cys31 and Cys47 are disulfide-bonded. Catalysis depends on charge relay system residues His46 and Asp96. Residue Asn127 is glycosylated (N-linked (GlcNAc...) asparagine). Cystine bridges form between Cys159/Cys181 and Cys190/Cys219. The Charge relay system role is filled by Ser194.

This sequence belongs to the peptidase S1 family. Heterodimer with venom peptide isomerase light chain; disulfide-linked. N-linked glycan at Asn-127 consists of Man3-GlcNAc2-Fuc. Expressed by the venom gland.

It is found in the secreted. Its function is as follows. Peptide isomerase that inverts the chirality at the Ser-81 of omega-Aga IVB. Acts cofactor-independently. The sequence is that of Venom peptide isomerase heavy chain from Agelenopsis aperta (North American funnel-web spider).